A 471-amino-acid polypeptide reads, in one-letter code: Glycosyl hydrolase family 109 protein 1 (471 aa).

Positions Met1 to Ser15 are cleaved as a signal peptide. Cys16 carries N-palmitoyl cysteine lipidation. Cys16 carries S-diacylglycerol cysteine lipidation. Residues Met70–Arg71, Asp92, Trp141–His144, Glu161–Val162, and Asn190 contribute to the NAD(+) site. Substrate-binding positions include Tyr219, Arg235, Tyr247–His250, and Tyr325. Residue Tyr247 participates in NAD(+) binding.

The protein belongs to the Gfo/Idh/MocA family. Glycosyl hydrolase 109 subfamily. NAD(+) serves as cofactor.

The protein resides in the cell membrane. Glycosidase. The sequence is that of Glycosyl hydrolase family 109 protein 1 from Phocaeicola vulgatus (strain ATCC 8482 / DSM 1447 / JCM 5826 / CCUG 4940 / NBRC 14291 / NCTC 11154) (Bacteroides vulgatus).